Here is a 207-residue protein sequence, read N- to C-terminus: Large ribosomal subunit protein uL4 (207 aa).

Residues 55 to 76 form a disordered region; it reads ALVSGGGKKPWRQKGTGRARHG. Over residues 63–76 the composition is skewed to basic residues; the sequence is KPWRQKGTGRARHG.

It belongs to the universal ribosomal protein uL4 family. As to quaternary structure, part of the 50S ribosomal subunit.

One of the primary rRNA binding proteins, this protein initially binds near the 5'-end of the 23S rRNA. It is important during the early stages of 50S assembly. It makes multiple contacts with different domains of the 23S rRNA in the assembled 50S subunit and ribosome. In terms of biological role, forms part of the polypeptide exit tunnel. The protein is Large ribosomal subunit protein uL4 of Phytoplasma mali (strain AT).